A 144-amino-acid chain; its full sequence is Cornifin-A (144 aa).

The interval 1 to 41 is disordered; sequence MSSHQQKQPCTVPPQLHQQQVKQPCQPPPQEPCAPKTKDPC. Low complexity predominate over residues 13–24; it reads PPQLHQQQVKQP. 13 repeat units span residues 27 to 34, 35 to 42, 43 to 49, 50 to 57, 58 to 65, 66 to 73, 74 to 81, 82 to 89, 90 to 97, 98 to 105, 106 to 113, 114 to 121, and 122 to 129. Residues 27 to 129 are 13 X 8 AA approximate tandem repeats; it reads PPPQEPCAPK…CHPVVPEPCP (103 aa).

This sequence belongs to the cornifin (SPRR) family. In terms of tissue distribution, expressed in fetal periderm, hair follicles and in the thickened epidermis of the lip and footpad. Also present in the epithelia of various tissues such as the penis, vagina, forestomach, tongue and esophagus.

It localises to the cytoplasm. Cross-linked envelope protein of keratinocytes. It is a keratinocyte protein that first appears in the cell cytosol, but ultimately becomes cross-linked to membrane proteins by transglutaminase. All that results in the formation of an insoluble envelope beneath the plasma membrane. May participate widely in the construction of cell envelopes in cornifying epithelia characterized by either increased thickness or a requirement for extreme flexibility. This Mus musculus (Mouse) protein is Cornifin-A (Sprr1a).